The following is a 471-amino-acid chain: MFAFYFLTACISLKGVFGVSPSYNGLGLTPQMGWDNWNTFACDVSEQLLLDTADRISDLGLKDMGYKYIILDDCWSSGRDSDGFLVADEQKFPNGMGHVADHLHNNSFLFGMYSSAGEYTCAGYPGSLGREEEDAQFFANNRVDYLKYDNCYNKGQFGTPEISYHRYKAMSDALNKTGRPIFYSLCNWGQDLTFYWGSGIANSWRMSGDITAEFTRPDSRCPCDGDEYDCKYAGFHCSIMNILNKAAPMGQNAGVGGWNDLDNLEVRVGNLTDDEEKAHFPMWAMVKSPLIIGADVNTLKPSSYSIYSQASVIAINQDPKGIPATRVWRYYVSDTDEYGQGEIQMWSGPLDNGDQVVALLNGGSVPRPMNTTLEEIFFDSNLGSKELTSTWDIYDLWANRVDNSTASAILGQNKTATGILYNATEQSYKDGLSKNDTRLFGQKIGSLSPNAILNTTVPAHGIAFYRLRPSA.

The signal sequence occupies residues 1 to 18 (MFAFYFLTACISLKGVFG). Cysteines 42 and 74 form a disulfide. Positions 72 and 73 each coordinate substrate. Asparagine 105 carries an N-linked (GlcNAc...) asparagine glycan. An intrachain disulfide couples cysteine 121 to cysteine 151. Lysine 147 lines the substrate pocket. The active-site Nucleophile is aspartate 149. N-linked (GlcNAc...) asparagine glycosylation is present at asparagine 175. Arginine 205 serves as a coordination point for substrate. The active-site Proton donor is the aspartate 209. 2 disulfides stabilise this stretch: cysteine 221–cysteine 237 and cysteine 223–cysteine 230. Substrate is bound at residue glutamine 251. N-linked (GlcNAc...) asparagine glycosylation is found at asparagine 270, asparagine 370, asparagine 403, asparagine 413, asparagine 422, asparagine 435, and asparagine 454.

This sequence belongs to the glycosyl hydrolase 27 family. Homotetramer.

The protein resides in the secreted. It carries out the reaction Hydrolysis of terminal, non-reducing alpha-D-galactose residues in alpha-D-galactosides, including galactose oligosaccharides, galactomannans and galactolipids.. This is Alpha-galactosidase 2 (MEL2) from Saccharomyces cerevisiae (Baker's yeast).